Reading from the N-terminus, the 258-residue chain is Ribosomal RNA small subunit methyltransferase J (258 aa).

Residues 104 to 105 (RD), 120 to 121 (ER), and Asp-175 contribute to the S-adenosyl-L-methionine site.

The protein belongs to the methyltransferase superfamily. RsmJ family.

The protein resides in the cytoplasm. The catalysed reaction is guanosine(1516) in 16S rRNA + S-adenosyl-L-methionine = N(2)-methylguanosine(1516) in 16S rRNA + S-adenosyl-L-homocysteine + H(+). Its function is as follows. Specifically methylates the guanosine in position 1516 of 16S rRNA. This is Ribosomal RNA small subunit methyltransferase J from Chromobacterium violaceum (strain ATCC 12472 / DSM 30191 / JCM 1249 / CCUG 213 / NBRC 12614 / NCIMB 9131 / NCTC 9757 / MK).